The primary structure comprises 137 residues: uncharacterized protein (137 aa).

The protein belongs to the ycf72 family.

It localises to the plastid. The protein localises to the chloroplast. This is an uncharacterized protein from Oryza nivara (Indian wild rice).